The following is a 212-amino-acid chain: Calaxin (212 aa).

3 consecutive EF-hand domains span residues 65 to 100 (TDDM…FLRG), 101 to 136 (TLDE…SLLK), and 146 to 181 (GIKD…ENLL). Positions 78, 80, 82, 84, 89, 114, 116, 118, 125, 159, 161, 163, 165, and 170 each coordinate Ca(2+).

As to quaternary structure, component of the outer dynein arm-docking complex along with ODAD1, ODAD2, ODAD3 and ODAD4.

It localises to the cytoplasm. It is found in the cytoskeleton. The protein resides in the cilium axoneme. Its subcellular location is the cell projection. The protein localises to the cilium. It localises to the flagellum. Its function is as follows. Component of the outer dynein arm-docking complex (ODA-DC) that mediates outer dynein arms (ODA) binding onto the doublet microtubule. Seems to regulate the assembly of both ODAs and their axonemal docking complex onto ciliary microtubules. Regulates ciliary and flagellar motility and is required for cilia-driven determination of body laterality. The sequence is that of Calaxin (Clxn) from Mus musculus (Mouse).